Consider the following 664-residue polypeptide: Intraflagellar transport protein 70A2 (664 aa).

TPR repeat units follow at residues 11-44 (DGEFTAVVYRLIRDSRYSEAVQLLSAELQRSPRS), 45-78 (RAGLSLLAYCYYRLQEFELAAECYEQLSQMHPEL), 153-186 (PDGLVNMGCLLYKEGHYEAACSKFFAALQASGYQ), 188-220 (DVSYNLALACYSNRHYAPALKHIANIIERGIRQ), 395-423 (QVQEARHNRDDEVVIKAVNEYDETLEKYI), 424-456 (PVLMAQAKIYWNLENYQMVEKIFRKSVEFCNDH), and 458-491 (VWKLNVAHVLFMQENKYKEAIGFYEPIVKKNYDN). Residues 507-534 (YIMTSQNEEAEELMRKIEKEEEQLSYGD) adopt a coiled-coil conformation. A TPR 8 repeat occupies 543–576 (CIVNLVIGTLYCAKGNYDFGISRVIKSLEPYHKK).

The protein belongs to the TTC30/dfy-1/fleer family. As to quaternary structure, interacts wit the IFT B complex component IFT52.

Its subcellular location is the cell projection. It is found in the cilium. Its function is as follows. Required for polyglutamylation of axonemal tubulin. Plays a role in anterograde intraflagellar transport (IFT), the process by which cilia precursors are transported from the base of the cilium to the site of their incorporation at the tip. This chain is Intraflagellar transport protein 70A2 (Ift70a2), found in Rattus norvegicus (Rat).